Reading from the N-terminus, the 606-residue chain is Phosphomethylpyrimidine synthase (606 aa).

Positions 84–103 (EPYPARSVKPEDNGLTSSPI) are disordered. Substrate is bound by residues Asn209, Met238, Tyr267, His303, 323-325 (SRG), 364-367 (DGLR), and Glu403. His407 lines the Zn(2+) pocket. Residue Tyr430 coordinates substrate. His471 provides a ligand contact to Zn(2+). The [4Fe-4S] cluster site is built by Cys551, Cys554, and Cys559.

Belongs to the ThiC family. As to quaternary structure, homodimer. It depends on [4Fe-4S] cluster as a cofactor.

It carries out the reaction 5-amino-1-(5-phospho-beta-D-ribosyl)imidazole + S-adenosyl-L-methionine = 4-amino-2-methyl-5-(phosphooxymethyl)pyrimidine + CO + 5'-deoxyadenosine + formate + L-methionine + 3 H(+). It functions in the pathway cofactor biosynthesis; thiamine diphosphate biosynthesis. Its function is as follows. Catalyzes the synthesis of the hydroxymethylpyrimidine phosphate (HMP-P) moiety of thiamine from aminoimidazole ribotide (AIR) in a radical S-adenosyl-L-methionine (SAM)-dependent reaction. This chain is Phosphomethylpyrimidine synthase, found in Bartonella tribocorum (strain CIP 105476 / IBS 506).